Here is a 405-residue protein sequence, read N- to C-terminus: Probable tRNA sulfurtransferase (405 aa).

Residues 60-165 (DKIDQRLKLV…QDAIYISNQL (106 aa)) form the THUMP domain. ATP is bound by residues 183-184 (ML), 208-209 (HF), R265, G287, and Q296.

This sequence belongs to the ThiI family.

The protein localises to the cytoplasm. The enzyme catalyses [ThiI sulfur-carrier protein]-S-sulfanyl-L-cysteine + a uridine in tRNA + 2 reduced [2Fe-2S]-[ferredoxin] + ATP + H(+) = [ThiI sulfur-carrier protein]-L-cysteine + a 4-thiouridine in tRNA + 2 oxidized [2Fe-2S]-[ferredoxin] + AMP + diphosphate. The catalysed reaction is [ThiS sulfur-carrier protein]-C-terminal Gly-Gly-AMP + S-sulfanyl-L-cysteinyl-[cysteine desulfurase] + AH2 = [ThiS sulfur-carrier protein]-C-terminal-Gly-aminoethanethioate + L-cysteinyl-[cysteine desulfurase] + A + AMP + 2 H(+). The protein operates within cofactor biosynthesis; thiamine diphosphate biosynthesis. Catalyzes the ATP-dependent transfer of a sulfur to tRNA to produce 4-thiouridine in position 8 of tRNAs, which functions as a near-UV photosensor. Also catalyzes the transfer of sulfur to the sulfur carrier protein ThiS, forming ThiS-thiocarboxylate. This is a step in the synthesis of thiazole, in the thiamine biosynthesis pathway. The sulfur is donated as persulfide by IscS. The chain is Probable tRNA sulfurtransferase from Lactobacillus gasseri (strain ATCC 33323 / DSM 20243 / BCRC 14619 / CIP 102991 / JCM 1131 / KCTC 3163 / NCIMB 11718 / NCTC 13722 / AM63).